Here is a 298-residue protein sequence, read N- to C-terminus: Bifunctional protein FolD (298 aa).

NADP(+) contacts are provided by residues 165 to 167, Ser-190, and Ile-231; that span reads GRS.

The protein belongs to the tetrahydrofolate dehydrogenase/cyclohydrolase family. As to quaternary structure, homodimer.

It catalyses the reaction (6R)-5,10-methylene-5,6,7,8-tetrahydrofolate + NADP(+) = (6R)-5,10-methenyltetrahydrofolate + NADPH. The catalysed reaction is (6R)-5,10-methenyltetrahydrofolate + H2O = (6R)-10-formyltetrahydrofolate + H(+). It participates in one-carbon metabolism; tetrahydrofolate interconversion. In terms of biological role, catalyzes the oxidation of 5,10-methylenetetrahydrofolate to 5,10-methenyltetrahydrofolate and then the hydrolysis of 5,10-methenyltetrahydrofolate to 10-formyltetrahydrofolate. This chain is Bifunctional protein FolD, found in Prochlorococcus marinus (strain AS9601).